The following is a 98-amino-acid chain: Alpha-elicitin MGM-alpha (98 aa).

3 cysteine pairs are disulfide-bonded: C3–C71, C27–C56, and C51–C95.

Belongs to the elicitin family.

The protein localises to the secreted. Its function is as follows. Induces local and distal defense responses (incompatible hypersensitive reaction) in plants from the solanaceae and cruciferae families. Elicits leaf necrosis and causes the accumulation of pathogenesis-related proteins. Might interact with the lipidic molecules of the plasma membrane. The sequence is that of Alpha-elicitin MGM-alpha from Phytophthora megasperma (Potato pink rot fungus).